The following is a 559-amino-acid chain: Beta-glucuronidase (559 aa).

The N-terminal stretch at 1–19 is a signal peptide; that stretch reads MKRILGLIAYASVPTVINA. Residues Asn53, Asn91, Asn99, and Asn143 are each glycosylated (N-linked (GlcNAc...) asparagine). Glu194 serves as the catalytic Proton donor. N-linked (GlcNAc...) asparagine glycans are attached at residues Asn203, Asn222, and Asn280. Catalysis depends on Glu312, which acts as the Nucleophile. Asn427, Asn440, Asn465, Asn491, and Asn520 each carry an N-linked (GlcNAc...) asparagine glycan.

The protein belongs to the glycosyl hydrolase 79 family.

It localises to the secreted. The catalysed reaction is a beta-D-glucuronoside + H2O = D-glucuronate + an alcohol. Beta-glucuronidase that hydrolyzes beta-glucuronosyl and 4-O-methyl-beta-glucuronosyl residues of arabinogalactan-protein. Hydrolyzed heparan sulfate only very weakly. Has no activity on xylan from birchwood. Able to catalyze the transglycosylation of glucuronic acid (GlcA) residues from p-nitrophenyl-beta-glucuronic acid (PNP beta-GlcA) to various monosaccharide acceptors such as glucose, galactose and xylose. In Neurospora crassa (strain ATCC 24698 / 74-OR23-1A / CBS 708.71 / DSM 1257 / FGSC 987), this protein is Beta-glucuronidase.